A 590-amino-acid chain; its full sequence is Putative sodium/calcium exchanger 6 (590 aa).

A signal peptide spans 1 to 19 (MRIHFFAFLIILSLVGCDG). A run of 11 helical transmembrane segments spans residues 97–117 (IILIITGVIYMLVLFIMVSSA), 139–159 (VAGVTFMAFGNGAPDVFGAIA), 173–193 (LGELFGAGLFVTTMVLAVTIF), 208–228 (IAFYLVALAFLAFCFVYYDHV), 230–250 (IWMPITFLGVYLIYVCTVILS), 368–388 (PITLLQCLICPVFLLFCIQVC), 397–417 (PGLWMYGLILSVLLTAAVLFF), 440–460 (IAWIYLISSEVVNVVTMLGVV), 499–519 (AAAIGGQLFNLLIGFGLPFTI), 535–555 (YRLLMLFLAISLIFTLIAMFA), and 568–588 (LVFIYISFFVFIGLSLDDILV).

Belongs to the Ca(2+):cation antiporter (CaCA) (TC 2.A.19) family.

It is found in the membrane. The chain is Putative sodium/calcium exchanger 6 (ncx-6) from Caenorhabditis elegans.